A 459-amino-acid chain; its full sequence is UDP-N-acetylmuramate--L-alanine ligase (459 aa).

118 to 124 contributes to the ATP binding site; it reads GTHGKTT.

It belongs to the MurCDEF family.

It is found in the cytoplasm. It catalyses the reaction UDP-N-acetyl-alpha-D-muramate + L-alanine + ATP = UDP-N-acetyl-alpha-D-muramoyl-L-alanine + ADP + phosphate + H(+). Its pathway is cell wall biogenesis; peptidoglycan biosynthesis. Functionally, cell wall formation. This Lachnospira eligens (strain ATCC 27750 / DSM 3376 / VPI C15-48 / C15-B4) (Eubacterium eligens) protein is UDP-N-acetylmuramate--L-alanine ligase.